A 464-amino-acid polypeptide reads, in one-letter code: Growth hormone-releasing hormone receptor (464 aa).

The signal sequence occupies residues 1 to 22 (MDSLLWATWVLCLLNLWGVALG). The Extracellular segment spans residues 23–130 (HLHLECDFIT…EEKSYFSTVK (108 aa)). 3 disulfides stabilise this stretch: Cys41-Cys64, Cys55-Cys96, and Cys78-Cys112. A glycan (N-linked (GlcNAc...) asparagine) is linked at Asn50. The chain crosses the membrane as a helical span at residues 131–151 (IIYTTGHSISIVALCVAIAIL). At 152 to 167 (VALRRLHCPRNYIHTQ) the chain is on the cytoplasmic side. The chain crosses the membrane as a helical span at residues 168 to 188 (LFATFILKASAVFLKDAAVFQ). Over 189–210 (GDSTDHCSMSTILCKVSVAVSH) the chain is Extracellular. Residues 211-231 (FATMTNFSWLLAEAVYLSCLL) form a helical membrane-spanning segment. Over 232 to 240 (ASTSPRSKP) the chain is Cytoplasmic. The helical transmembrane segment at 241–261 (AFWWLVLAGWGLPVLCTGTWV) threads the bilayer. At 262–283 (GCKLAFEDTACWDLDDSSPYWW) the chain is on the extracellular side. The chain crosses the membrane as a helical span at residues 284 to 304 (IIKGPIVLSVGVNFGLFLNII). The Cytoplasmic portion of the chain corresponds to 305-372 (CILLRKLGPA…QLPWRLSKST (68 aa)). The chain crosses the membrane as a helical span at residues 373-393 (LLLIPLFGIHYIIFNFLPDSA). The Extracellular portion of the chain corresponds to 394 to 398 (GLGIR). A helical membrane pass occupies residues 399-419 (LPLELGLGSFQGFVVAVLYCF). Residues 420–464 (LNQEVRTEISRKWYGHDPELLPARRTCTEWTTPPRSRVKVLTSEC) lie on the Cytoplasmic side of the membrane.

Belongs to the G-protein coupled receptor 2 family. As to expression, pituitary gland.

The protein localises to the cell membrane. In terms of biological role, receptor for GRF, coupled to G proteins which activate adenylyl cyclase. Stimulates somatotroph cell growth, growth hormone gene transcription and growth hormone secretion. The sequence is that of Growth hormone-releasing hormone receptor (Ghrhr) from Rattus norvegicus (Rat).